A 354-amino-acid polypeptide reads, in one-letter code: Peptide chain release factor 1 (354 aa).

The residue at position 232 (Q232) is an N5-methylglutamine.

It belongs to the prokaryotic/mitochondrial release factor family. Methylated by PrmC. Methylation increases the termination efficiency of RF1.

The protein localises to the cytoplasm. In terms of biological role, peptide chain release factor 1 directs the termination of translation in response to the peptide chain termination codons UAG and UAA. This chain is Peptide chain release factor 1, found in Jannaschia sp. (strain CCS1).